A 486-amino-acid chain; its full sequence is Membrane-bound lytic murein transglycosylase F (486 aa).

Residues 1–21 form the signal peptide; sequence MKRLKINYILIGVVTLLLALA. Residues 22–268 are non-LT domain; that stretch reads LWPNITWRGG…RLEEKYLGHV (247 aa). Residues 269 to 486 are LT domain; it reads GSFDYVDTKT…AVTPELALNF (218 aa). Residue Glu313 is part of the active site.

The protein in the N-terminal section; belongs to the bacterial solute-binding protein 3 family. In the C-terminal section; belongs to the transglycosylase Slt family.

The protein localises to the cell outer membrane. It carries out the reaction Exolytic cleavage of the (1-&gt;4)-beta-glycosidic linkage between N-acetylmuramic acid (MurNAc) and N-acetylglucosamine (GlcNAc) residues in peptidoglycan, from either the reducing or the non-reducing ends of the peptidoglycan chains, with concomitant formation of a 1,6-anhydrobond in the MurNAc residue.. Murein-degrading enzyme that degrades murein glycan strands and insoluble, high-molecular weight murein sacculi, with the concomitant formation of a 1,6-anhydromuramoyl product. Lytic transglycosylases (LTs) play an integral role in the metabolism of the peptidoglycan (PG) sacculus. Their lytic action creates space within the PG sacculus to allow for its expansion as well as for the insertion of various structures such as secretion systems and flagella. In Serratia proteamaculans (strain 568), this protein is Membrane-bound lytic murein transglycosylase F.